We begin with the raw amino-acid sequence, 262 residues long: Tryptophan synthase alpha chain (262 aa).

Residues E48 and D59 each act as proton acceptor in the active site.

This sequence belongs to the TrpA family. In terms of assembly, tetramer of two alpha and two beta chains.

The catalysed reaction is (1S,2R)-1-C-(indol-3-yl)glycerol 3-phosphate + L-serine = D-glyceraldehyde 3-phosphate + L-tryptophan + H2O. The protein operates within amino-acid biosynthesis; L-tryptophan biosynthesis; L-tryptophan from chorismate: step 5/5. Its function is as follows. The alpha subunit is responsible for the aldol cleavage of indoleglycerol phosphate to indole and glyceraldehyde 3-phosphate. This Helicobacter pylori (strain HPAG1) protein is Tryptophan synthase alpha chain.